The primary structure comprises 160 residues: UPF0758 protein YfjY (160 aa).

One can recognise an MPN domain in the interval A38–L160. The Zn(2+) site is built by H109, H111, and D122. Positions H109–D122 match the JAMM motif motif.

Belongs to the UPF0758 family.

In Escherichia coli (strain K12), this protein is UPF0758 protein YfjY (yfjY).